Reading from the N-terminus, the 908-residue chain is MGKAAALSRGGGCAGRSRGLSSLFTVVPCLSCHTAAPGMNSSAFGSGPASKPQLQPVQAPERELLSKQVCQPISEPASRSEPGSQTTSVPRPSGVGQESELQGLWPGSENGTRSVSIIKASPELAMPSPLQSTVGSLPVTKPESKLVPKTQSFLRQGQAKISVGTPVSGIGVQMVSPPLDSYKGWLLKWTNYLKGYQRRWFVLGNGLLSYYRNQGEMAHTCRATINLASTHFETEDSCGILLCNGARTYHLKASSEVDRQHWITALELAKAKAIRVMKTQSDDSGDDDEEPAAPADNSELHHTLKTLSLKLNDLSTCNDLIAKHGAALQRSLNELDSLKIPSECGEKLKVVNERATLFRITSNAMINACRDFLELAETHSRKWQRALNYEQEQRVHLEETIEQLAKQHNSLERAFCNTPGGPASSSKSFSEGSFLTSKGENSEEDEDTEYFDAMEDSTSFITVVTEAKEDRKPESGPGTTTVDWTSADNVLDGASFMPKNSCKVKRRVRIPDKPNYSLNLWSIMKNCIGRELSRIPMPVNFNEPLSMLQRLTEDLEYHHLLDKAVNCTSSVEQMCLVAAFSVSSYSTTVHRIAKPFNPMLGETFELDRMEDMGLRSLCEQVSHHPPSAAHHVFSKHGWSLWQEITIASKFRGKYISIMPLGAIHLEFQASGNHYVWRKSTSTVHNIIVGKLWIDQSGDIEIVNHKTKDRCQLKFVPYSYFSKEAARKVTGVVSDSQGKAHYVLSGSWDDQMECSKIVHSSPSSDGRQKTVYQTLPAKLLWRKYPLPENAENMYYFSELALTLNEQEDGVAPTDSRLRPDQRLMERGRWDEANTEKQRLEEKQRLSRRRRLESCTAGCGGEEEKESDGYVPLWFEKRLDPLTGEMACMYKGGYWEAKEKKDWHMCPNIF.

A disordered region spans residues 42 to 112 (SAFGSGPASK…GLWPGSENGT (71 aa)). A compositionally biased stretch (polar residues) spans 81–90 (EPGSQTTSVP). One can recognise a PH domain in the interval 179-271 (LDSYKGWLLK…WITALELAKA (93 aa)). Disordered regions lie at residues 279–299 (TQSD…DNSE), 413–445 (RAFC…SEED), and 822–843 (LMER…EKQR). Ser284 bears the Phosphoserine mark. Low complexity predominate over residues 424-437 (SSSKSFSEGSFLTS).

This sequence belongs to the OSBP family. As to quaternary structure, interacts with CCDC159. As to expression, expressed in the testis (at protein level). Expressed in postmeiotic germ cells of the testis.

The protein localises to the membrane. It localises to the cytoplasmic vesicle. It is found in the secretory vesicle. Its subcellular location is the acrosome. In terms of biological role, binds 7-ketocholesterol. Acts during spermatid development where its function is required prior to the removal of cytoplasm from the sperm head. The chain is Oxysterol-binding protein 2 (Osbp2) from Mus musculus (Mouse).